We begin with the raw amino-acid sequence, 98 residues long: NADH-ubiquinone oxidoreductase chain 4L (98 aa).

Helical transmembrane passes span 2–22, 26–46, and 58–79; these read PSTF…TLMF, LMST…MTSV, and PIPI…ALLV.

This sequence belongs to the complex I subunit 4L family. Core subunit of respiratory chain NADH dehydrogenase (Complex I) which is composed of 45 different subunits.

The protein localises to the mitochondrion inner membrane. The catalysed reaction is a ubiquinone + NADH + 5 H(+)(in) = a ubiquinol + NAD(+) + 4 H(+)(out). Its function is as follows. Core subunit of the mitochondrial membrane respiratory chain NADH dehydrogenase (Complex I) which catalyzes electron transfer from NADH through the respiratory chain, using ubiquinone as an electron acceptor. Part of the enzyme membrane arm which is embedded in the lipid bilayer and involved in proton translocation. The protein is NADH-ubiquinone oxidoreductase chain 4L of Mus musculus (Mouse).